The chain runs to 337 residues: Nucleotide sugar transporter SLC35D2 (337 aa).

At 1 to 27 (MTAGGQAEAEGAGGEPGAARLPSRVAR) the chain is on the cytoplasmic side. A helical membrane pass occupies residues 28 to 48 (LLSALFYGTCSFLIVLVNKAL). Topologically, residues 49-53 (LTTYG) are extracellular. A helical transmembrane segment spans residues 54–74 (FPSPIFLGIGQMAATIMILYV). The Cytoplasmic segment spans residues 75-146 (SKLNKIIHFP…IILGKQYSLN (72 aa)). Transmembrane regions (helical) follow at residues 147-167 (IILSVFAIILGAFIAAGSDLA) and 168-188 (FNLEGYIFVFLNDIFTAANGV). The Cytoplasmic segment spans residues 189-201 (YTKQKMDPKELGK). Residues 202 to 222 (YGVLFYNACFMIIPTLIISVS) form a helical membrane-spanning segment. Over 223 to 237 (TGDLQQATEFNQWKN) the chain is Extracellular. The chain crosses the membrane as a helical span at residues 238 to 258 (VVFILQFLLSCFLGFLLMYST). The Cytoplasmic segment spans residues 259–265 (VLCSYYN). Residues 266–288 (SALTTAVVGAIKNVSVAYIGILI) form a helical membrane-spanning segment. The Extracellular segment spans residues 289-292 (GGDY). A helical transmembrane segment spans residues 293–315 (IFSLLNFVGLNICMAGGLRYSFL). The Cytoplasmic segment spans residues 316–337 (TLSSQLKPKPVGEENICLDLKS).

This sequence belongs to the TPT transporter family. SLC35D subfamily. As to expression, highly expressed in heart, kidney, small intestine, placenta, lung and peripheral blood leukocyte. Weakly expressed in skeletal muscle and spleen. Not expressed in brain, colon and thymus.

Its subcellular location is the golgi apparatus membrane. The catalysed reaction is UMP(out) + UDP-N-acetyl-alpha-D-glucosamine(in) = UMP(in) + UDP-N-acetyl-alpha-D-glucosamine(out). It carries out the reaction UMP(out) + UDP-alpha-D-glucose(in) = UMP(in) + UDP-alpha-D-glucose(out). Nucleotide sugar antiporter transporting UDP-N-acetylglucosamine (UDP-GlcNAc) and UDP-glucose (UDP-Glc) from the cytosol into the lumen of the Golgi in exchange of UMP. By supplying UDP-N-acetylglucosamine, a donor substrate to heparan sulfate synthases, probably takes part in the synthesis of these glycoconjugates. The sequence is that of Nucleotide sugar transporter SLC35D2 from Homo sapiens (Human).